The sequence spans 276 residues: Nuclear egress protein 2 (276 aa).

The Perinuclear space portion of the chain corresponds to 1–245; that stretch reads MANVLKEKMY…FWRLSERHCR (245 aa). The helical transmembrane segment at 246 to 264 threads the bilayer; that stretch reads FALVGICFLLALYFCYVLL. Residues 265-276 are Nuclear-facing; it reads KKTPTPASGSVV.

The protein belongs to the herpesviridae NEC2 protein family. Forms a heterohexameric complex with NEC1. Post-translationally, phosphorylated.

The protein resides in the host nucleus inner membrane. Plays an essential role in virion nuclear egress, the first step of virion release from infected cell. Within the host nucleus, NEC1 interacts with the newly formed capsid through the vertexes and directs it to the inner nuclear membrane by associating with NEC2. Induces the budding of the capsid at the inner nuclear membrane as well as its envelopment into the perinuclear space. There, the NEC1/NEC2 complex promotes the fusion of the enveloped capsid with the outer nuclear membrane and the subsequent release of the viral capsid into the cytoplasm where it will reach the secondary budding sites in the host Golgi or trans-Golgi network. This Homo sapiens (Human) protein is Nuclear egress protein 2.